A 170-amino-acid polypeptide reads, in one-letter code: NADH-quinone oxidoreductase subunit B (170 aa).

C37, C38, C102, and C131 together coordinate [4Fe-4S] cluster.

Belongs to the complex I 20 kDa subunit family. NDH-1 is composed of 14 different subunits. Subunits NuoB, C, D, E, F, and G constitute the peripheral sector of the complex. Requires [4Fe-4S] cluster as cofactor.

The protein resides in the cell inner membrane. The enzyme catalyses a quinone + NADH + 5 H(+)(in) = a quinol + NAD(+) + 4 H(+)(out). In terms of biological role, NDH-1 shuttles electrons from NADH, via FMN and iron-sulfur (Fe-S) centers, to quinones in the respiratory chain. The immediate electron acceptor for the enzyme in this species is believed to be ubiquinone. Couples the redox reaction to proton translocation (for every two electrons transferred, four hydrogen ions are translocated across the cytoplasmic membrane), and thus conserves the redox energy in a proton gradient. This is NADH-quinone oxidoreductase subunit B from Geobacter sulfurreducens (strain ATCC 51573 / DSM 12127 / PCA).